A 367-amino-acid chain; its full sequence is Leu/Ile/Val-binding protein (367 aa).

A signal peptide spans 1 to 23 (MNIKGKALLAGCIALAFSNMALA). The cysteines at positions 76 and 101 are disulfide-linked.

The protein belongs to the leucine-binding protein family.

It localises to the periplasm. In terms of biological role, this protein is a component of the leucine, isoleucine, valine, (threonine) transport system, which is one of the two periplasmic binding protein-dependent transport systems of the high-affinity transport of the branched-chain amino acids. This Escherichia coli O157:H7 protein is Leu/Ile/Val-binding protein (livJ).